Reading from the N-terminus, the 116-residue chain is Aspartate 1-decarboxylase (116 aa).

The active-site Schiff-base intermediate with substrate; via pyruvic acid is the S25. A Pyruvic acid (Ser) modification is found at S25. T57 is a binding site for substrate. The active-site Proton donor is the Y58. 72–74 (GAA) is a binding site for substrate.

The protein belongs to the PanD family. As to quaternary structure, heterooctamer of four alpha and four beta subunits. Requires pyruvate as cofactor. In terms of processing, is synthesized initially as an inactive proenzyme, which is activated by self-cleavage at a specific serine bond to produce a beta-subunit with a hydroxyl group at its C-terminus and an alpha-subunit with a pyruvoyl group at its N-terminus.

It is found in the cytoplasm. The catalysed reaction is L-aspartate + H(+) = beta-alanine + CO2. Its pathway is cofactor biosynthesis; (R)-pantothenate biosynthesis; beta-alanine from L-aspartate: step 1/1. Its function is as follows. Catalyzes the pyruvoyl-dependent decarboxylation of aspartate to produce beta-alanine. This chain is Aspartate 1-decarboxylase, found in Helicobacter acinonychis (strain Sheeba).